Reading from the N-terminus, the 594-residue chain is Elongation factor 4 (594 aa).

The 183-residue stretch at 2–184 folds into the tr-type G domain; the sequence is KNIRNFSIIA…TIVAKVPAPE (183 aa). Residues 14–19 and 131–134 contribute to the GTP site; these read DHGKST and NKID.

The protein belongs to the TRAFAC class translation factor GTPase superfamily. Classic translation factor GTPase family. LepA subfamily.

It is found in the cell inner membrane. The catalysed reaction is GTP + H2O = GDP + phosphate + H(+). Functionally, required for accurate and efficient protein synthesis under certain stress conditions. May act as a fidelity factor of the translation reaction, by catalyzing a one-codon backward translocation of tRNAs on improperly translocated ribosomes. Back-translocation proceeds from a post-translocation (POST) complex to a pre-translocation (PRE) complex, thus giving elongation factor G a second chance to translocate the tRNAs correctly. Binds to ribosomes in a GTP-dependent manner. The sequence is that of Elongation factor 4 from Francisella tularensis subsp. tularensis (strain FSC 198).